The primary structure comprises 945 residues: Argonaute protein wago-1 (945 aa).

Residues 1-20 show a composition bias toward pro residues; that stretch reads MSPHPPQPHPPMPPMPPVTA. The disordered stretch occupies residues 1–41; the sequence is MSPHPPQPHPPMPPMPPVTAPPGAMTPMPPVPADAQKLHQS. A PAZ domain is found at 322–432; sequence TVIQKLFDIT…FPAELMTVSR (111 aa). Residues 636 to 899 enclose the Piwi domain; that stretch reads VKDGKRLTLE…PLYVANEYAK (264 aa).

Belongs to the Argonaute family. WAGO subfamily. In terms of assembly, interacts with rde-12. Interacts with znfx-1. Enriched in sperm and oocytes.

The protein localises to the cytoplasmic granule. Functionally, argonaute protein which is involved in the endogenous small interfering RNA (endo-siRNA) pathway. Interacts with secondary 22G-RNAs, which are RNA-dependent RNA polymerase-derived endo-siRNAs, typically 22 nucleotides in length with a 5'guanosine residue. In the germline, functions in a genome surveillance system to silence transposons and aberrant transcripts. This is Argonaute protein wago-1 from Caenorhabditis elegans.